The following is a 420-amino-acid chain: Reticulon-4 receptor-like 2 (420 aa).

The first 30 residues, 1 to 30, serve as a signal peptide directing secretion; the sequence is MLPGLRRLLQGPASACLLLTLLALPPVTPS. Cystine bridges form between C31-C37 and C35-C46. Residues 31 to 60 form the LRRNT domain; the sequence is CPMLCTCYSSPPTVSCQANNFSSVPLSLPP. N-linked (GlcNAc...) asparagine glycosylation is present at N50. 8 LRR repeats span residues 61–82, 83–104, 107–129, 132–153, 156–177, 180–201, 204–225, and 228–249; these read STQR…TFGP, NLLT…TFRH, ALEE…TFQG, RLQS…IFRG, SLQY…LFAD, NLSH…VFRG, SLDR…AFHG, and RLTI…ALAD. N93 is a glycosylation site (N-linked (GlcNAc...) asparagine). An N-linked (GlcNAc...) asparagine glycan is attached at N236. Residues 261-312 enclose the LRRCT domain; that stretch reads NPWACDCRARPLWAWFQRARVSSSDVTCATPPERQGRDLRTLRDTDFQACPP. Disulfide bonds link C265–C288 and C267–C310. The segment at 286–390 is disordered; the sequence is VTCATPPERQ…GEQTCPGAAC (105 aa). Over residues 294 to 306 the composition is skewed to basic and acidic residues; it reads RQGRDLRTLRDTD. Residues 315–327 form an important for interaction with MAG region; it reads PTRPGSRARGNSS. A compositionally biased stretch (basic and acidic residues) spans 351–360; that stretch reads LPAEDSRGRQ. Residue C390 is the site of GPI-anchor amidated cysteine attachment. Residues 391-420 constitute a propeptide, removed in mature form; it reads QAPADSRGPVLSAGLRTPLLCLLLLAPHHL.

Belongs to the Nogo receptor family. Interaction with MAG is controversial, and may be indirect. Interacts with MAG. Does not interact with OMG and RTN4. In terms of processing, undergoes zinc metalloproteinase-mediated ectodomain shedding in neuroblastoma cells; is released both as a full-length ectodomain and an N-terminal fragment containing the leucine-rich repeat (LRR) region of the protein. Post-translationally, N-glycosylated. O-glycosylated. Contains terminal sialic acid groups on its glycan chains. As to expression, detected in adult brain, in neocortex, hippocampus, striatum and dorsal root ganglion neurons, and in retina (at protein level). In brain, detected in cerebral cortex and hippocampus. Weak or no expression detected in the cerebellum, thalamus or striatum.

The protein resides in the cell membrane. Its subcellular location is the cell projection. It localises to the dendrite. The protein localises to the perikaryon. It is found in the axon. The protein resides in the membrane raft. Its function is as follows. Cell surface receptor that plays a functionally redundant role in the inhibition of neurite outgrowth mediated by MAG. Plays a functionally redundant role in postnatal brain development. Contributes to normal axon migration across the brain midline and normal formation of the corpus callosum. Does not seem to play a significant role in regulating axon regeneration in the adult central nervous system. Protects motoneurons against apoptosis; protection against apoptosis is probably mediated by MAG. Like other family members, plays a role in restricting the number dendritic spines and the number of synapses that are formed during brain development. Signaling mediates activation of Rho and downstream reorganization of the actin cytoskeleton. The chain is Reticulon-4 receptor-like 2 from Rattus norvegicus (Rat).